Consider the following 387-residue polypeptide: WD repeat-containing protein 55 (387 aa).

A compositionally biased stretch (basic and acidic residues) spans 1–10 (MATPTEHEDL). The interval 1–24 (MATPTEHEDLSEQEVTEDEFKTPK) is disordered. 7 WD repeats span residues 33–72 (KLEA…GENK), 79–118 (HHLK…LETR), 122–160 (AHKV…SFMD), 163–202 (HHED…FELL), 205–244 (IQNG…ATSD), 247–286 (AVQA…VVGS), and 290–329 (HVGE…DEKV). Positions 356 to 387 (FFAGLLDTTEENGKEGENDEDDDDEDSDSGSD) are disordered. Over residues 372 to 387 (ENDEDDDDEDSDSGSD) the composition is skewed to acidic residues.

It belongs to the WD repeat WDR55 family.

The protein resides in the nucleus. The protein localises to the nucleolus. In terms of biological role, nucleolar protein that acts as a modulator of rRNA synthesis. Plays a central role during organogenesis. This chain is WD repeat-containing protein 55 (wdr55), found in Danio rerio (Zebrafish).